The chain runs to 40 residues: Dolichyl-diphosphooligosaccharide--protein glycosyltransferase subunit 4 (40 aa).

Over 1–4 (MITD) the chain is Lumenal. A helical transmembrane segment spans residues 5-25 (VQLAIFSNVLGVFLFLLVVAY). At 26 to 40 (HYINANTGKPIPKAK) the chain is on the cytoplasmic side.

The protein belongs to the OST4 family. In terms of assembly, component of the oligosaccharyltransferase (OST) complex.

The protein resides in the endoplasmic reticulum membrane. Functionally, subunit of the oligosaccharyl transferase (OST) complex that catalyzes the initial transfer of a defined glycan (Glc(3)Man(9)GlcNAc(2) in eukaryotes) from the lipid carrier dolichol-pyrophosphate to an asparagine residue within an Asn-X-Ser/Thr consensus motif in nascent polypeptide chains, the first step in protein N-glycosylation. N-glycosylation occurs cotranslationally and the complex associates with the Sec61 complex at the channel-forming translocon complex that mediates protein translocation across the endoplasmic reticulum (ER). All subunits are required for a maximal enzyme activity. This chain is Dolichyl-diphosphooligosaccharide--protein glycosyltransferase subunit 4, found in Drosophila ananassae (Fruit fly).